We begin with the raw amino-acid sequence, 670 residues long: Meiotic sister-chromatid recombination protein 6, mitochondrial (670 aa).

The transit peptide at 1–27 (MLFSRASKIRVSQLMRRLQSTAVGRAA) directs the protein to the mitochondrion.

It is found in the mitochondrion. In terms of biological role, may be involved in the control of meiotic sister-chromatid recombination. The protein is Meiotic sister-chromatid recombination protein 6, mitochondrial (MSC6) of Eremothecium gossypii (strain ATCC 10895 / CBS 109.51 / FGSC 9923 / NRRL Y-1056) (Yeast).